Reading from the N-terminus, the 154-residue chain is Ribosome maturation factor RimP (154 aa).

Belongs to the RimP family.

It localises to the cytoplasm. In terms of biological role, required for maturation of 30S ribosomal subunits. This chain is Ribosome maturation factor RimP, found in Flavobacterium psychrophilum (strain ATCC 49511 / DSM 21280 / CIP 103535 / JIP02/86).